The chain runs to 189 residues: UPF0398 protein LGAS_1023 (189 aa).

Belongs to the UPF0398 family.

This chain is UPF0398 protein LGAS_1023, found in Lactobacillus gasseri (strain ATCC 33323 / DSM 20243 / BCRC 14619 / CIP 102991 / JCM 1131 / KCTC 3163 / NCIMB 11718 / NCTC 13722 / AM63).